The primary structure comprises 1269 residues: Protein CFT1 (1269 aa).

The interval 393-427 is disordered; it reads PESQPEETLDDGNESDDDLYGGDTAQTEDTTNRPL. A compositionally biased stretch (acidic residues) spans 395 to 412; it reads SQPEETLDDGNESDDDLY. The segment covering 416 to 425 has biased composition (polar residues); that stretch reads TAQTEDTTNR.

Belongs to the CFT1 family.

The protein localises to the nucleus. Its function is as follows. RNA-binding component of the cleavage and polyadenylation factor (CPF) complex, which plays a key role in polyadenylation-dependent pre-mRNA 3'-end formation and cooperates with cleavage factors including the CFIA complex and NAB4/CFIB. Involved in poly(A) site recognition. May be involved in coupling transcription termination and mRNA 3'-end formation. The polypeptide is Protein CFT1 (CFT1) (Yarrowia lipolytica (strain CLIB 122 / E 150) (Yeast)).